The following is an 882-amino-acid chain: Protein translocase subunit SecA (882 aa).

ATP contacts are provided by residues Gln79, 97–101, and Asp487; that span reads GEGKT.

The protein belongs to the SecA family.

It is found in the plastid. The protein localises to the chloroplast stroma. The protein resides in the chloroplast thylakoid membrane. The catalysed reaction is ATP + H2O + cellular proteinSide 1 = ADP + phosphate + cellular proteinSide 2.. Has a central role in coupling the hydrolysis of ATP to the transfer of proteins across the thylakoid membrane. This is Protein translocase subunit SecA from Gracilaria tenuistipitata var. liui (Red alga).